Reading from the N-terminus, the 411-residue chain is Carbohydrate sulfotransferase 1 (411 aa).

The Cytoplasmic segment spans residues 1–2 (MQ). A helical; Signal-anchor for type II membrane protein transmembrane segment spans residues 3-23 (CSWKAVLLLALASIAIQYTAI). The Lumenal portion of the chain corresponds to 24-411 (RTFTAKSFHT…VEERDFRPFS (388 aa)). N-linked (GlcNAc...) asparagine glycosylation occurs at N56. 69-75 (TRSGSSF) is a 3'-phosphoadenylyl sulfate binding site. Residues N145 and N189 are each glycosylated (N-linked (GlcNAc...) asparagine). 234–242 (RDPRGILAS) contacts 3'-phosphoadenylyl sulfate. N-linked (GlcNAc...) asparagine glycosylation is present at N334. Positions 337–339 (RGD) match the Cell attachment site motif.

It belongs to the sulfotransferase 1 family. Gal/GlcNAc/GalNAc subfamily. As to expression, widely expressed at low level. Expressed in brain and skeletal muscle. Expressed by high endothelial cells (HEVs) and leukocytes.

It localises to the golgi apparatus membrane. The catalysed reaction is 3'-phosphoadenylyl sulfate + keratan = adenosine 3',5'-bisphosphate + keratan 6'-sulfate.. Its pathway is glycan metabolism. Sulfotransferase that utilizes 3'-phospho-5'-adenylyl sulfate (PAPS) as sulfonate donor to catalyze the transfer of sulfate to position 6 of internal galactose (Gal) residues of keratan. Cooperates with B4GALT4 and B3GNT7 glycosyltransferases and CHST6 sulfotransferase to construct and elongate disulfated disaccharide unit [-&gt;3(6-sulfoGalbeta)1-&gt;4(6-sulfoGlcNAcbeta)1-&gt;] within keratan sulfate polymer. Has a preference for sulfating keratan sulfate, but it also transfers sulfate to the unsulfated polymer. Involved in biosynthesis of phosphacan, a major keratan sulfate proteoglycan in the developing brain. Involved in biosynthesis of 6-sulfoGalbeta-containing O-linked glycans in high endothelial venules of lymph nodes. May act in a synergistic manner with CHST4 to generate sialyl 6',6-disulfo Lewis X motif, a recognition determinant for immune cell receptors implicated in leukocyte trafficking. Catalyzes sulfation of N-acetyllactosamine (LacNAc) oligosaccharides with highest efficiency for sialylated LacNAc structures. In Homo sapiens (Human), this protein is Carbohydrate sulfotransferase 1.